Reading from the N-terminus, the 393-residue chain is Acetylornithine aminotransferase 1 (393 aa).

Arginine 131 provides a ligand contact to N(2)-acetyl-L-ornithine. 215-218 contacts pyridoxal 5'-phosphate; sequence DEVQ. Lysine 244 is modified (N6-(pyridoxal phosphate)lysine). Threonine 272 contacts N(2)-acetyl-L-ornithine. Residue threonine 273 participates in pyridoxal 5'-phosphate binding.

The protein belongs to the class-III pyridoxal-phosphate-dependent aminotransferase family. ArgD subfamily. Homodimer. The cofactor is pyridoxal 5'-phosphate.

It localises to the cytoplasm. The catalysed reaction is N(2)-acetyl-L-ornithine + 2-oxoglutarate = N-acetyl-L-glutamate 5-semialdehyde + L-glutamate. The protein operates within amino-acid biosynthesis; L-arginine biosynthesis; N(2)-acetyl-L-ornithine from L-glutamate: step 4/4. The polypeptide is Acetylornithine aminotransferase 1 (Bordetella pertussis (strain Tohama I / ATCC BAA-589 / NCTC 13251)).